Reading from the N-terminus, the 532-residue chain is Phosphoenolpyruvate carboxykinase (ATP) (532 aa).

Residues arginine 60, tyrosine 194, and lysine 200 each coordinate substrate. ATP contacts are provided by residues lysine 200, histidine 219, and 237 to 245 (GLSGTGKTT). Lysine 200 and histidine 219 together coordinate Mn(2+). Residue aspartate 258 participates in Mn(2+) binding. 3 residues coordinate ATP: glutamate 286, arginine 324, and threonine 449. Arginine 324 serves as a coordination point for substrate.

The protein belongs to the phosphoenolpyruvate carboxykinase (ATP) family. The cofactor is Mn(2+).

The protein resides in the cytoplasm. It catalyses the reaction oxaloacetate + ATP = phosphoenolpyruvate + ADP + CO2. The protein operates within carbohydrate biosynthesis; gluconeogenesis. Its function is as follows. Involved in the gluconeogenesis. Catalyzes the conversion of oxaloacetate (OAA) to phosphoenolpyruvate (PEP) through direct phosphoryl transfer between the nucleoside triphosphate and OAA. The chain is Phosphoenolpyruvate carboxykinase (ATP) from Ruegeria sp. (strain TM1040) (Silicibacter sp.).